Here is a 360-residue protein sequence, read N- to C-terminus: Histidinol-phosphate aminotransferase (360 aa).

Lys222 is subject to N6-(pyridoxal phosphate)lysine.

This sequence belongs to the class-II pyridoxal-phosphate-dependent aminotransferase family. Histidinol-phosphate aminotransferase subfamily. In terms of assembly, homodimer. It depends on pyridoxal 5'-phosphate as a cofactor.

It carries out the reaction L-histidinol phosphate + 2-oxoglutarate = 3-(imidazol-4-yl)-2-oxopropyl phosphate + L-glutamate. It functions in the pathway amino-acid biosynthesis; L-histidine biosynthesis; L-histidine from 5-phospho-alpha-D-ribose 1-diphosphate: step 7/9. In Listeria monocytogenes serotype 4b (strain F2365), this protein is Histidinol-phosphate aminotransferase.